Reading from the N-terminus, the 465-residue chain is 3-isopropylmalate dehydratase large subunit (465 aa).

[4Fe-4S] cluster contacts are provided by C347, C407, and C410. Residues 416–443 are disordered; the sequence is DTLRPGERSASTSNRNFEGRQGPGGRTH.

It belongs to the aconitase/IPM isomerase family. LeuC type 1 subfamily. Heterodimer of LeuC and LeuD. It depends on [4Fe-4S] cluster as a cofactor.

It carries out the reaction (2R,3S)-3-isopropylmalate = (2S)-2-isopropylmalate. It functions in the pathway amino-acid biosynthesis; L-leucine biosynthesis; L-leucine from 3-methyl-2-oxobutanoate: step 2/4. Functionally, catalyzes the isomerization between 2-isopropylmalate and 3-isopropylmalate, via the formation of 2-isopropylmaleate. The chain is 3-isopropylmalate dehydratase large subunit from Frankia casuarinae (strain DSM 45818 / CECT 9043 / HFP020203 / CcI3).